The sequence spans 439 residues: Glutamate--tRNA ligase 2 (439 aa).

Positions 6 to 16 (PSPTGDMHIGN) match the 'HIGH' region motif. Residues 232-236 (KMSKR) carry the 'KMSKS' region motif. ATP is bound at residue Lys235.

This sequence belongs to the class-I aminoacyl-tRNA synthetase family. Glutamate--tRNA ligase type 1 subfamily. In terms of assembly, monomer.

The protein localises to the cytoplasm. The enzyme catalyses tRNA(Glu) + L-glutamate + ATP = L-glutamyl-tRNA(Glu) + AMP + diphosphate. In terms of biological role, catalyzes the attachment of glutamate to tRNA(Glu) in a two-step reaction: glutamate is first activated by ATP to form Glu-AMP and then transferred to the acceptor end of tRNA(Glu). The sequence is that of Glutamate--tRNA ligase 2 from Helicobacter pylori (strain Shi470).